A 509-amino-acid chain; its full sequence is Maturase K (509 aa).

Belongs to the intron maturase 2 family. MatK subfamily.

It localises to the plastid. The protein resides in the chloroplast. Usually encoded in the trnK tRNA gene intron. Probably assists in splicing its own and other chloroplast group II introns. The protein is Maturase K of Cicer arietinum (Chickpea).